Consider the following 427-residue polypeptide: Tryptophan synthase beta chain 1 (427 aa).

Lysine 107 carries the post-translational modification N6-(pyridoxal phosphate)lysine.

This sequence belongs to the TrpB family. In terms of assembly, tetramer of two alpha and two beta chains. It depends on pyridoxal 5'-phosphate as a cofactor.

The enzyme catalyses (1S,2R)-1-C-(indol-3-yl)glycerol 3-phosphate + L-serine = D-glyceraldehyde 3-phosphate + L-tryptophan + H2O. It functions in the pathway amino-acid biosynthesis; L-tryptophan biosynthesis; L-tryptophan from chorismate: step 5/5. Functionally, the beta subunit is responsible for the synthesis of L-tryptophan from indole and L-serine. The polypeptide is Tryptophan synthase beta chain 1 (trpB1) (Aeropyrum pernix (strain ATCC 700893 / DSM 11879 / JCM 9820 / NBRC 100138 / K1)).